The chain runs to 310 residues: Putative F-box protein PP2-B2 (310 aa).

Positions 1–34 are disordered; sequence MIQSTMGHKQSVDSRGKGRKVPGSSSMVQKHRVE. The F-box domain occupies 44–90; it reads PSLFDNLPEDCISNIISFTSPRDACVAASVSKTFESAVNSDSVWDKF.

The sequence is that of Putative F-box protein PP2-B2 (PP2B2) from Arabidopsis thaliana (Mouse-ear cress).